A 196-amino-acid polypeptide reads, in one-letter code: Phosphoheptose isomerase (196 aa).

Residues 36–196 enclose the SIS domain; sequence MVACLMNEGK…AVDYMLLGGD (161 aa). Residue 51–53 participates in substrate binding; that stretch reads NGG. Residues His-60 and Glu-64 each coordinate Zn(2+). Residues Glu-64, 93–94, 119–121, Ser-124, and Gln-174 contribute to the substrate site; these read ND and STS. The Zn(2+) site is built by Gln-174 and His-182.

This sequence belongs to the SIS family. GmhA subfamily. In terms of assembly, homotetramer. It depends on Zn(2+) as a cofactor.

The protein resides in the cytoplasm. It catalyses the reaction 2 D-sedoheptulose 7-phosphate = D-glycero-alpha-D-manno-heptose 7-phosphate + D-glycero-beta-D-manno-heptose 7-phosphate. The protein operates within carbohydrate biosynthesis; D-glycero-D-manno-heptose 7-phosphate biosynthesis; D-glycero-alpha-D-manno-heptose 7-phosphate and D-glycero-beta-D-manno-heptose 7-phosphate from sedoheptulose 7-phosphate: step 1/1. Functionally, catalyzes the isomerization of sedoheptulose 7-phosphate in D-glycero-D-manno-heptose 7-phosphate. In Laribacter hongkongensis (strain HLHK9), this protein is Phosphoheptose isomerase.